A 238-amino-acid chain; its full sequence is Small ribosomal subunit protein uS2c (238 aa).

This sequence belongs to the universal ribosomal protein uS2 family.

The protein localises to the plastid. It is found in the chloroplast. The chain is Small ribosomal subunit protein uS2c (rps2) from Oltmannsiellopsis viridis (Marine flagellate).